Consider the following 117-residue polypeptide: Peptidyl-tRNA hydrolase (117 aa).

Belongs to the PTH2 family.

It localises to the cytoplasm. It catalyses the reaction an N-acyl-L-alpha-aminoacyl-tRNA + H2O = an N-acyl-L-amino acid + a tRNA + H(+). In terms of biological role, the natural substrate for this enzyme may be peptidyl-tRNAs which drop off the ribosome during protein synthesis. In Thermoplasma acidophilum (strain ATCC 25905 / DSM 1728 / JCM 9062 / NBRC 15155 / AMRC-C165), this protein is Peptidyl-tRNA hydrolase.